The primary structure comprises 429 residues: GTPase Obg (429 aa).

The region spanning 1–158 is the Obg domain; it reads MFVDQVKIYV…RNVQLELKVL (158 aa). A disordered region spans residues 124–145; the sequence is RGNKRFATPANPAPELSENGEP. Residues 159–329 form the OBG-type G domain; that stretch reads ADVGLVGFPS…LLLAIADKLE (171 aa). Residues 165–172, 190–194, 212–215, 282–285, and 310–312 each bind GTP; these read GFPSVGKS, FTTIV, DLPG, NKMD, and SAV. The Mg(2+) site is built by serine 172 and threonine 192. The OCT domain occupies 351 to 429; that stretch reads KYVAEEPDFE…LLDYEFEFMD (79 aa).

Belongs to the TRAFAC class OBG-HflX-like GTPase superfamily. OBG GTPase family. In terms of assembly, monomer. Mg(2+) serves as cofactor.

The protein localises to the cytoplasm. Its function is as follows. An essential GTPase which binds GTP, GDP and possibly (p)ppGpp with moderate affinity, with high nucleotide exchange rates and a fairly low GTP hydrolysis rate. Plays a role in control of the cell cycle, stress response, ribosome biogenesis and in those bacteria that undergo differentiation, in morphogenesis control. This Listeria monocytogenes serotype 4b (strain F2365) protein is GTPase Obg.